A 205-amino-acid polypeptide reads, in one-letter code: Large ribosomal subunit protein bL25 (205 aa).

The protein belongs to the bacterial ribosomal protein bL25 family. CTC subfamily. As to quaternary structure, part of the 50S ribosomal subunit; part of the 5S rRNA/L5/L18/L25 subcomplex. Contacts the 5S rRNA. Binds to the 5S rRNA independently of L5 and L18.

This is one of the proteins that binds to the 5S RNA in the ribosome where it forms part of the central protuberance. This is Large ribosomal subunit protein bL25 from Stutzerimonas stutzeri (strain A1501) (Pseudomonas stutzeri).